A 236-amino-acid polypeptide reads, in one-letter code: Phosphoribosylaminoimidazole-succinocarboxamide synthase (236 aa).

It belongs to the SAICAR synthetase family.

It carries out the reaction 5-amino-1-(5-phospho-D-ribosyl)imidazole-4-carboxylate + L-aspartate + ATP = (2S)-2-[5-amino-1-(5-phospho-beta-D-ribosyl)imidazole-4-carboxamido]succinate + ADP + phosphate + 2 H(+). The protein operates within purine metabolism; IMP biosynthesis via de novo pathway; 5-amino-1-(5-phospho-D-ribosyl)imidazole-4-carboxamide from 5-amino-1-(5-phospho-D-ribosyl)imidazole-4-carboxylate: step 1/2. The protein is Phosphoribosylaminoimidazole-succinocarboxamide synthase of Pseudomonas syringae pv. syringae (strain B728a).